Consider the following 170-residue polypeptide: Adenine phosphoribosyltransferase (170 aa).

It belongs to the purine/pyrimidine phosphoribosyltransferase family. In terms of assembly, homodimer.

The protein localises to the cytoplasm. The catalysed reaction is AMP + diphosphate = 5-phospho-alpha-D-ribose 1-diphosphate + adenine. It functions in the pathway purine metabolism; AMP biosynthesis via salvage pathway; AMP from adenine: step 1/1. Catalyzes a salvage reaction resulting in the formation of AMP, that is energically less costly than de novo synthesis. This is Adenine phosphoribosyltransferase from Kosmotoga olearia (strain ATCC BAA-1733 / DSM 21960 / TBF 19.5.1).